The primary structure comprises 648 residues: Phosphomethylpyrimidine synthase (648 aa).

Substrate-binding positions include N236, M265, Y294, H330, 350 to 352 (SRG), 391 to 394 (DGLR), and E430. Position 434 (H434) interacts with Zn(2+). A substrate-binding site is contributed by Y457. H498 contacts Zn(2+). [4Fe-4S] cluster is bound by residues C578, C581, and C586.

The protein belongs to the ThiC family. As to quaternary structure, homodimer. [4Fe-4S] cluster is required as a cofactor.

It catalyses the reaction 5-amino-1-(5-phospho-beta-D-ribosyl)imidazole + S-adenosyl-L-methionine = 4-amino-2-methyl-5-(phosphooxymethyl)pyrimidine + CO + 5'-deoxyadenosine + formate + L-methionine + 3 H(+). The protein operates within cofactor biosynthesis; thiamine diphosphate biosynthesis. Catalyzes the synthesis of the hydroxymethylpyrimidine phosphate (HMP-P) moiety of thiamine from aminoimidazole ribotide (AIR) in a radical S-adenosyl-L-methionine (SAM)-dependent reaction. The polypeptide is Phosphomethylpyrimidine synthase (Aliivibrio salmonicida (strain LFI1238) (Vibrio salmonicida (strain LFI1238))).